A 311-amino-acid polypeptide reads, in one-letter code: Methionyl-tRNA formyltransferase (311 aa).

112-115 is a (6S)-5,6,7,8-tetrahydrofolate binding site; that stretch reads SLLP.

This sequence belongs to the Fmt family.

The catalysed reaction is L-methionyl-tRNA(fMet) + (6R)-10-formyltetrahydrofolate = N-formyl-L-methionyl-tRNA(fMet) + (6S)-5,6,7,8-tetrahydrofolate + H(+). In terms of biological role, attaches a formyl group to the free amino group of methionyl-tRNA(fMet). The formyl group appears to play a dual role in the initiator identity of N-formylmethionyl-tRNA by promoting its recognition by IF2 and preventing the misappropriation of this tRNA by the elongation apparatus. The protein is Methionyl-tRNA formyltransferase of Rhizobium meliloti (strain 1021) (Ensifer meliloti).